The sequence spans 461 residues: Bifunctional protein GlmU (461 aa).

A pyrophosphorylase region spans residues 1–229; that stretch reads MNKYVVILAA…FSESLGVNDR (229 aa). UDP-N-acetyl-alpha-D-glucosamine-binding positions include 8–11, lysine 22, glutamine 72, and 77–78; these read LAAG and GT. Aspartate 102 lines the Mg(2+) pocket. Positions 139, 154, 169, and 227 each coordinate UDP-N-acetyl-alpha-D-glucosamine. A Mg(2+)-binding site is contributed by asparagine 227. The tract at residues 230-250 is linker; sequence IALAQATKIMQRRINEEHMKN. The interval 251-461 is N-acetyltransferase; the sequence is GVSFIDPDTA…LPLSKDKEWE (211 aa). Residues arginine 332 and lysine 350 each contribute to the UDP-N-acetyl-alpha-D-glucosamine site. The active-site Proton acceptor is the histidine 362. UDP-N-acetyl-alpha-D-glucosamine is bound by residues tyrosine 365 and asparagine 376. Residues 385-386, alanine 422, and arginine 439 contribute to the acetyl-CoA site; that span reads NY.

The protein in the N-terminal section; belongs to the N-acetylglucosamine-1-phosphate uridyltransferase family. It in the C-terminal section; belongs to the transferase hexapeptide repeat family. In terms of assembly, homotrimer. Requires Mg(2+) as cofactor.

It localises to the cytoplasm. The enzyme catalyses alpha-D-glucosamine 1-phosphate + acetyl-CoA = N-acetyl-alpha-D-glucosamine 1-phosphate + CoA + H(+). The catalysed reaction is N-acetyl-alpha-D-glucosamine 1-phosphate + UTP + H(+) = UDP-N-acetyl-alpha-D-glucosamine + diphosphate. Its pathway is nucleotide-sugar biosynthesis; UDP-N-acetyl-alpha-D-glucosamine biosynthesis; N-acetyl-alpha-D-glucosamine 1-phosphate from alpha-D-glucosamine 6-phosphate (route II): step 2/2. It participates in nucleotide-sugar biosynthesis; UDP-N-acetyl-alpha-D-glucosamine biosynthesis; UDP-N-acetyl-alpha-D-glucosamine from N-acetyl-alpha-D-glucosamine 1-phosphate: step 1/1. The protein operates within bacterial outer membrane biogenesis; LPS lipid A biosynthesis. Catalyzes the last two sequential reactions in the de novo biosynthetic pathway for UDP-N-acetylglucosamine (UDP-GlcNAc). The C-terminal domain catalyzes the transfer of acetyl group from acetyl coenzyme A to glucosamine-1-phosphate (GlcN-1-P) to produce N-acetylglucosamine-1-phosphate (GlcNAc-1-P), which is converted into UDP-GlcNAc by the transfer of uridine 5-monophosphate (from uridine 5-triphosphate), a reaction catalyzed by the N-terminal domain. The protein is Bifunctional protein GlmU of Lactobacillus gasseri (strain ATCC 33323 / DSM 20243 / BCRC 14619 / CIP 102991 / JCM 1131 / KCTC 3163 / NCIMB 11718 / NCTC 13722 / AM63).